A 247-amino-acid chain; its full sequence is Tetraspanin-18 (247 aa).

Over 1 to 15 (MEGDCLSCMKYLMFL) the chain is Cytoplasmic. A helical transmembrane segment spans residues 16–36 (FNFFIFLGGACLLGVGIWVIV). Topologically, residues 37–49 (DPTGFREIVAANP) are extracellular. The chain crosses the membrane as a helical span at residues 50–70 (LLFTGAYIMLAMGAMLFLLGF). Topologically, residues 71 to 82 (LGCCGAIRENKC) are cytoplasmic. Residues 83–103 (LLLFFFMFILLIFLAELSAAI) form a helical membrane-spanning segment. Residues 104 to 222 (LAFIFRENLT…SFETYVYLAG (119 aa)) are Extracellular-facing. N-linked (GlcNAc...) asparagine glycans are attached at residues N111 and N129. A helical transmembrane segment spans residues 223-243 (ALAIGVLAIELFAMIFAMCLF). Residues 244 to 247 (RGIQ) are Cytoplasmic-facing.

This sequence belongs to the tetraspanin (TM4SF) family.

It is found in the membrane. In terms of biological role, maintains CDH6 protein and promotes CDH6-dependent adherens junctions, inhibiting neural crest migration. The polypeptide is Tetraspanin-18 (Gallus gallus (Chicken)).